A 931-amino-acid chain; its full sequence is Bifunctional glutamine synthetase adenylyltransferase/adenylyl-removing enzyme (931 aa).

Residues 1-434 (MTLAPADLPA…STEFAALLAP (434 aa)) form an adenylyl removase region. The interval 441 to 931 (PDALANYWRS…ACIAAELPFA (491 aa)) is adenylyl transferase.

This sequence belongs to the GlnE family. Mg(2+) serves as cofactor.

The catalysed reaction is [glutamine synthetase]-O(4)-(5'-adenylyl)-L-tyrosine + phosphate = [glutamine synthetase]-L-tyrosine + ADP. It catalyses the reaction [glutamine synthetase]-L-tyrosine + ATP = [glutamine synthetase]-O(4)-(5'-adenylyl)-L-tyrosine + diphosphate. In terms of biological role, involved in the regulation of glutamine synthetase GlnA, a key enzyme in the process to assimilate ammonia. When cellular nitrogen levels are high, the C-terminal adenylyl transferase (AT) inactivates GlnA by covalent transfer of an adenylyl group from ATP to specific tyrosine residue of GlnA, thus reducing its activity. Conversely, when nitrogen levels are low, the N-terminal adenylyl removase (AR) activates GlnA by removing the adenylyl group by phosphorolysis, increasing its activity. The regulatory region of GlnE binds the signal transduction protein PII (GlnB) which indicates the nitrogen status of the cell. This is Bifunctional glutamine synthetase adenylyltransferase/adenylyl-removing enzyme from Stenotrophomonas maltophilia (strain R551-3).